A 558-amino-acid chain; its full sequence is Scarecrow-like protein 6 (558 aa).

A disordered region spans residues 19–90; it reads FSSSFPQPPS…GGDATTDEQC (72 aa). A compositionally biased stretch (low complexity) spans 54–75; it reads SVLDSLISPTSSSTVSSSHGGN. The 359-residue stretch at 196 to 554 folds into the GRAS domain; sequence KRLNPGPVGI…TELVGVSAWR (359 aa). The segment at 203–257 is leucine repeat I (LRI); the sequence is VGITEQLVKAAEVIESDTCLAQGILARLNQQLSSPVGKPLERAAFYFKEALNNLL. The tract at residues 276-340 is VHIID; sequence YKSFSEISPV…DNAAPLSLKI (65 aa). The VHIID signature appears at 307–311; it reads LHIID. The tract at residues 356–388 is leucine repeat II (LRII); it reads FTQDNLKHFASEINISLDIQVLSLDLLGSISWP. Residues 396–479 form a PFYRE region; the sequence is VAVNISAASF…RFLIQPEIEK (84 aa). Residues 482–554 form an SAW region; the sequence is LDRSRPIERP…TELVGVSAWR (73 aa).

This sequence belongs to the GRAS family. Interacts with Meloidogyne incognita 16D10. Expressed in seedlings, roots, leaves, flowers and siliques.

It localises to the nucleus. Its function is as follows. Probable transcription factor involved in plant development. This chain is Scarecrow-like protein 6 (SCL6), found in Arabidopsis thaliana (Mouse-ear cress).